The following is a 212-amino-acid chain: Ribonuclease HII (212 aa).

Positions 19–212 (CIIVGVDEVG…SKISYMFKNS (194 aa)) constitute an RNase H type-2 domain. A divalent metal cation contacts are provided by Asp25, Glu26, and Asp120.

This sequence belongs to the RNase HII family. Mn(2+) serves as cofactor. Mg(2+) is required as a cofactor.

The protein localises to the cytoplasm. The enzyme catalyses Endonucleolytic cleavage to 5'-phosphomonoester.. Functionally, endonuclease that specifically degrades the RNA of RNA-DNA hybrids. The sequence is that of Ribonuclease HII from Ehrlichia ruminantium (strain Welgevonden).